Reading from the N-terminus, the 287-residue chain is MGIRYYRPYTAGTRQKTSSDFAEITRDRPEKSLVKAKHRAKGRNNRGVITSRRRGGGHKRRYRIIDFYRNKLGVPGTIATVEYDPNRNARIALVNYKDGEKRYILHPRNVQVGTTIVAGPDAPIEVGNALPLERIPLGTEVHNVELIPGKGGQLARAAGALAQVVAKEGKMVTLKLPSGEVRLFQKECYATIGQVGNVESNNITIGKAGRNRWKARRPKVRGSVMNPVDHPHGGGEGRAPIGRSGPVTPWGKPTLGYKTRKKKKQSNKLIVRRRRRSSKRSRGGRQS.

Basic residues-rich tracts occupy residues G209–V220 and K258–S287. A disordered region spans residues G209 to S287.

This sequence belongs to the universal ribosomal protein uL2 family. As to quaternary structure, part of the 50S ribosomal subunit. Forms a bridge to the 30S subunit in the 70S ribosome.

In terms of biological role, one of the primary rRNA binding proteins. Required for association of the 30S and 50S subunits to form the 70S ribosome, for tRNA binding and peptide bond formation. It has been suggested to have peptidyltransferase activity; this is somewhat controversial. Makes several contacts with the 16S rRNA in the 70S ribosome. The chain is Large ribosomal subunit protein uL2 from Acaryochloris marina (strain MBIC 11017).